The sequence spans 121 residues: Small ribosomal subunit protein uS13 (121 aa).

The disordered stretch occupies residues G94–K121.

It belongs to the universal ribosomal protein uS13 family. In terms of assembly, part of the 30S ribosomal subunit. Forms a loose heterodimer with protein S19. Forms two bridges to the 50S subunit in the 70S ribosome.

In terms of biological role, located at the top of the head of the 30S subunit, it contacts several helices of the 16S rRNA. In the 70S ribosome it contacts the 23S rRNA (bridge B1a) and protein L5 of the 50S subunit (bridge B1b), connecting the 2 subunits; these bridges are implicated in subunit movement. Contacts the tRNAs in the A and P-sites. The chain is Small ribosomal subunit protein uS13 from Burkholderia mallei (strain NCTC 10247).